Here is a 305-residue protein sequence, read N- to C-terminus: MYDIAPRRSGSRPGPGRDKTRRRSRFSAAGNPGVERRASRKSLPSHARRLELCLHERRRYRGFFAALAQTPSEEIAIVRSLSVPLVKTTPVSLPFSLDQTVADNCLTLSGMGYYLGIGGCCPACSAGDGRLATVSREALILAFVQQINTIFEHRTFLASLVVLADRHSTPLQDLLADTLGQPELFFVHTILRGGGACDPRFLFYPDPTYGGHMLYVIFPGTSAHLHYRLIDRMLTACPGYRFAAHVWQSTFVLVVRRNAEKPADAEIPTVSAADIYCKMRDISFDGGLMLEYQRLYATFDEFPPP.

The interval 1-42 (MYDIAPRRSGSRPGPGRDKTRRRSRFSAAGNPGVERRASRKS) is disordered. The CCCH-type zinc finger occupies 105-224 (CLTLSGMGYY…YVIFPGTSAH (120 aa)).

This sequence belongs to the herpesviridae NEC1 protein family. Forms a heterohexameric complex with NEC2. Interacts with capsid vertex specific component 2/CVC2; this interaction directs the capsid to the host inner nuclear membrane to initiate budding. In terms of processing, phosphorylated at serine residues in the N-terminus. This phosphorylation regulates the localization within the inner nuclear membrane.

It is found in the host nucleus inner membrane. Functionally, plays an essential role in virion nuclear egress, the first step of virion release from infected cell. Within the host nucleus, NEC1 interacts with the newly formed capsid through the vertexes and directs it to the inner nuclear membrane by associating with NEC2. Induces the budding of the capsid at the inner nuclear membrane as well as its envelopment into the perinuclear space. There, the NEC1/NEC2 complex promotes the fusion of the enveloped capsid with the outer nuclear membrane and the subsequent release of the viral capsid into the cytoplasm where it will reach the secondary budding sites in the host Golgi or trans-Golgi network. The chain is Nuclear egress protein 1 from Human herpesvirus 2 (strain HG52) (HHV-2).